A 502-amino-acid polypeptide reads, in one-letter code: Maturase K (502 aa).

This sequence belongs to the intron maturase 2 family. MatK subfamily.

The protein resides in the plastid. Its subcellular location is the chloroplast. Usually encoded in the trnK tRNA gene intron. Probably assists in splicing its own and other chloroplast group II introns. The chain is Maturase K from Arabis blepharophylla (Coast rock-cress).